We begin with the raw amino-acid sequence, 796 residues long: MAETKDVFGQEPHPVEDDLYKERTRKRRKSDRDQRFRAFPSMEQSALKEYEKLESRTRRVLSNTYQKLIQSVFLDDSIPNGVKYLINRLLALIEKPTVDPIYIALFGSTGAGKSSLINAIIQQAMFLPVSGESICTSCIVQVSSGCCVQYEAKIHLLSDQEWREELKNLTKLLHRTEELSREEADAWNRDEAVEEATWKLQMIYGNGAESKNYEELLRAKPKRKIPTSRVITLKAEEAEELSIKLDPYIRTQRRDWDGEAAEMRIWPLIKHVEVTLPKSDLIPEGVVLVDIPGTGDFNSKRDEMWKKTIDKCSVIWVISDIERVSGGQAHEDLLNESIKACQRGFCRDVALVVTKMDKLHLPEYLRERKAGNQAIQSQREAVLERNEMIKLQRTRILKEKLKRKLPADFKVLEASDLVYTVSAQEYWQQALLTEEETEIPKLREYIRKSLLDKKKRTVTKYVTEAFGLLLLTDSFNSTQNLPNEHLHMSVLRRFAEEKVELLEKAIAQCFACMEQPLQEGVRTARTSYRCILRACLVRSKGNQGFHQTLKAVCLKNGIYASRTLARIDLNEALTQPVYDQIDPVFGSIFRTGKPTGSALMPHIDAFKQSLQEKMTEIGIRSGWKYDSCKKNFLIQEISAILGGLEDHILRRKRRIYESLTASVQSDLKLCYEEAAQITGKKACERMKDAIRRGVDRQVAEGMFERAQERMQHQFQQLKTGIVEKVKGSITTMLALASSQGDGLYKELADVGSEYKEMEKLHRSLREVAENARLRKGMQEFLLRASPSKAGPPGTSL.

The span at 1 to 22 (MAETKDVFGQEPHPVEDDLYKE) shows a compositional bias: basic and acidic residues. The interval 1-35 (MAETKDVFGQEPHPVEDDLYKERTRKRRKSDRDQR) is disordered. 107 to 114 (GSTGAGKS) is a binding site for GTP. 2 coiled-coil regions span residues 158 to 185 (SDQEWREELKNLTKLLHRTEELSREEAD) and 745 to 775 (KELADVGSEYKEMEKLHRSLREVAENARLRK).

As to expression, expressed in germinal center B-cell and in lymphomas derived from germinal center B-cell.

The protein localises to the nucleus speckle. In terms of biological role, nuclear GTPase found in germinal center B-cells, where it may inhibit function of the activation-induced cytidine deaminase AICDA. Reduces somatic hypermutation in B-cells which may enhance genome stability. The protein is Nuclear GTPase SLIP-GC (NUGGC) of Homo sapiens (Human).